Here is a 160-residue protein sequence, read N- to C-terminus: MTNKVIYPGTFDPVTNGHTDLIGRAAKLFDEVVVGVANSPSKRPLFDLDERVQLARQVTAHLPNVKVVGFSGLLVDFAREQQANVLIRGLRAVSDFEYEFQLANMNRRLMPELESVFLTPAEENSFISSTLVKEVALHGGDIRQFVDPAVAAAIKAKQTK.

Thr-10 lines the substrate pocket. Residues 10-11 (TF) and His-18 contribute to the ATP site. Substrate-binding residues include Lys-42, Leu-74, and Arg-88. ATP-binding positions include 89–91 (GLR), Glu-99, and 124–130 (NSFISST).

Belongs to the bacterial CoaD family. Homohexamer. Mg(2+) serves as cofactor.

The protein resides in the cytoplasm. It carries out the reaction (R)-4'-phosphopantetheine + ATP + H(+) = 3'-dephospho-CoA + diphosphate. The protein operates within cofactor biosynthesis; coenzyme A biosynthesis; CoA from (R)-pantothenate: step 4/5. Functionally, reversibly transfers an adenylyl group from ATP to 4'-phosphopantetheine, yielding dephospho-CoA (dPCoA) and pyrophosphate. The polypeptide is Phosphopantetheine adenylyltransferase (Aeromonas hydrophila subsp. hydrophila (strain ATCC 7966 / DSM 30187 / BCRC 13018 / CCUG 14551 / JCM 1027 / KCTC 2358 / NCIMB 9240 / NCTC 8049)).